The following is a 1460-amino-acid chain: CLIP-associating protein 1-A (1460 aa).

2 HEAT repeats span residues 87–124 and 163–200; these read TQLGTVLPSLMDRLGDAKDSVREQDQSLLIKIMEQASN and LTLSKIVPHICNLLGDPNSQVRDAAINCLVEIYRHVGE. The interval 237-293 is disordered; that stretch reads SDKNFDDEDSVDGNRPSSASSSASSKAPQTARRGVSLGTARRPGPSSAAAKTGGTAK. Low complexity predominate over residues 279 to 293; it reads PGPSSAAAKTGGTAK. HEAT repeat units lie at residues 407–442 and 443–479; these read HGAEAIMPTVFNLVPNSAKIMATSGIVAIRLIIRHT and HVPRLIPIITSNCTSKSVAVRRRCYDFLDLLLQEWQT. 3 disordered regions span residues 545–605, 640–733, and 778–800; these read SDSI…IDVN, IRTR…RFGI, and PYGMYSDDDANSDASSACSERSY. Residues 550 to 569 show a composition bias toward low complexity; that stretch reads SLPQSDRSSSSSQESLNRPL. Residues 571-597 show a composition bias toward polar residues; sequence TKRSPTGSTVSRASSTTSKSTPGSLQR. Positions 645–659 are enriched in low complexity; it reads QSSGSTTSTASTPAD. 2 stretches are compositionally biased toward polar residues: residues 669–681 and 715–724; these read VSQSQPGSRSNSP and QGCSRETSPS. Residues 789–800 show a composition bias toward low complexity; it reads SDASSACSERSY. Residues 942–979 form an HEAT 5 repeat; it reads FIVDQTQTPNLKVKVAILKYIESLARQMDPTDFVNSSE. A disordered region spans residues 1041-1084; that stretch reads LKNSSNSSMGSPSNTIGRTPSRHSSSRASPLTSPTNCSHGGLSP. Positions 1042 to 1054 are enriched in low complexity; that stretch reads KNSSNSSMGSPSN. Over residues 1066 to 1078 the composition is skewed to polar residues; it reads SRASPLTSPTNCS. HEAT repeat units follow at residues 1272–1309 and 1390–1427; these read LLLETLGDKDHAIRALALRVLREILRNQPARFKNYAEL and GLLQGYDNTESSVRKASVFCLVAIYSVIGEELKPYLAQ.

The protein belongs to the CLASP family.

It localises to the cytoplasm. Its subcellular location is the cytoskeleton. The protein resides in the microtubule organizing center. The protein localises to the centrosome. It is found in the chromosome. It localises to the centromere. Its subcellular location is the kinetochore. The protein resides in the spindle. The protein localises to the golgi apparatus. It is found in the trans-Golgi network. Functionally, microtubule plus-end tracking protein that promotes the stabilization of dynamic microtubules during anaphase. Plays a crucial role in chromatin-induced microtubule formation. May also act at microtubule minus ends. May be involved in the nucleation of noncentrosomal microtubules originating from the trans-Golgi network (TGN). The sequence is that of CLIP-associating protein 1-A (clasp1-a) from Xenopus laevis (African clawed frog).